Reading from the N-terminus, the 26-residue chain is Dermaseptin-J1 (26 aa).

At V26 the chain carries Valine amide.

Expressed by the skin glands.

Its subcellular location is the secreted. Its function is as follows. Has antimicrobial activity. The protein is Dermaseptin-J1 of Phasmahyla jandaia (Jandaia leaf frog).